Reading from the N-terminus, the 300-residue chain is Hemagglutinin 1 (300 aa).

The chain crosses the membrane as a helical span at residues Phe200 to Asp221.

Its subcellular location is the cell membrane. Induces agglutination of neuraminidase-treated erythrocytes. This chain is Hemagglutinin 1 (hag1), found in Eikenella corrodens.